A 746-amino-acid chain; its full sequence is Root phototropism protein 3 (746 aa).

Positions 1–24 (MMWESESDGGVGVGGGGGREYGDG) are disordered. Residues 9–19 (GGVGVGGGGGR) show a composition bias toward gly residues. One can recognise a BTB domain in the interval 54 to 122 (SDLLVKIGDM…CYGVPVDLTA (69 aa)). In terms of domain architecture, NPH3 spans 250-605 (DWWFEDVSIL…VQVLFSEQVK (356 aa)). The segment at 461-500 (EQTEGSSPSRMSPSPSQSMYADIPRGNNNNGGGGGGNNQN) is disordered. Over residues 466-478 (SSPSRMSPSPSQS) the composition is skewed to low complexity. At Y546 the chain carries Phosphotyrosine. A disordered region spans residues 708–746 (SKLTKMSGQESHDISSGGEQAGVDHPPPRKPRRWRNSIS). Over residues 735 to 746 (PRKPRRWRNSIS) the composition is skewed to basic residues.

This sequence belongs to the NPH3 family. As to quaternary structure, interacts with PKS1, PKS2, RPT2, PHOT1 and PHOT2. Subunit of a complex made of CAR6, PHOT1 and RPT3/NPH3. Post-translationally, phosphorylated in the dark. Expressed in hypocotyls, guard cells and mesophyll cells.

It localises to the cell membrane. The protein operates within protein modification; protein ubiquitination. In terms of biological role, may act as a substrate-specific adapter of an E3 ubiquitin-protein ligase complex (CUL3-RBX1-BTB) which mediates the ubiquitination and subsequent proteasomal degradation of target proteins. Signal transducer of the phototropic response and photo-induced movements. Involved in the phot1 pathway under low blue light (LBL) fluence rate and in the phot2 pathway under higher fluence rate of blue light (HBL). Necessary for root and hypocotyl phototropisms, but not for the regulation of stomata opening. Not involved in chloroplast accumulation and translocation. This is Root phototropism protein 3 (RPT3) from Arabidopsis thaliana (Mouse-ear cress).